Consider the following 311-residue polypeptide: DNA-directed RNA polymerase subunit alpha (311 aa).

An alpha N-terminal domain (alpha-NTD) region spans residues 1-227 (MAQFQIECVE…NLFCSLRNLD (227 aa)). The segment at 242–311 (ISQVLIEELQ…GISLPKEKTD (70 aa)) is alpha C-terminal domain (alpha-CTD).

This sequence belongs to the RNA polymerase alpha chain family. In terms of assembly, in plastids the minimal PEP RNA polymerase catalytic core is composed of four subunits: alpha, beta, beta', and beta''. When a (nuclear-encoded) sigma factor is associated with the core the holoenzyme is formed, which can initiate transcription.

Its subcellular location is the plastid. The protein resides in the chloroplast. The enzyme catalyses RNA(n) + a ribonucleoside 5'-triphosphate = RNA(n+1) + diphosphate. In terms of biological role, DNA-dependent RNA polymerase catalyzes the transcription of DNA into RNA using the four ribonucleoside triphosphates as substrates. The polypeptide is DNA-directed RNA polymerase subunit alpha (Porphyra purpurea (Red seaweed)).